The following is an 87-amino-acid chain: HssA/B-like protein 18 (87 aa).

It belongs to the hssA/B family.

The chain is HssA/B-like protein 18 (hssl18) from Dictyostelium discoideum (Social amoeba).